Here is a 599-residue protein sequence, read N- to C-terminus: Aspartate--tRNA ligase (599 aa).

Residue Glu175 coordinates L-aspartate. The interval 199-202 (QQFK) is aspartate. Residues Arg221 and His446 each coordinate L-aspartate. 221–223 (RDE) is an ATP binding site. Residue Glu480 coordinates ATP. Arg487 serves as a coordination point for L-aspartate. 532 to 535 (GVDR) is a binding site for ATP.

This sequence belongs to the class-II aminoacyl-tRNA synthetase family. Type 1 subfamily. As to quaternary structure, homodimer.

It localises to the cytoplasm. It carries out the reaction tRNA(Asp) + L-aspartate + ATP = L-aspartyl-tRNA(Asp) + AMP + diphosphate. Catalyzes the attachment of L-aspartate to tRNA(Asp) in a two-step reaction: L-aspartate is first activated by ATP to form Asp-AMP and then transferred to the acceptor end of tRNA(Asp). The polypeptide is Aspartate--tRNA ligase (Streptomyces griseus subsp. griseus (strain JCM 4626 / CBS 651.72 / NBRC 13350 / KCC S-0626 / ISP 5235)).